The sequence spans 87 residues: Putative regulatory protein syc0519_c (87 aa).

This sequence belongs to the RemA family.

This Synechococcus sp. (strain ATCC 27144 / PCC 6301 / SAUG 1402/1) (Anacystis nidulans) protein is Putative regulatory protein syc0519_c.